We begin with the raw amino-acid sequence, 432 residues long: Alkaline protease secretion protein AprE (432 aa).

At 1-14 the chain is on the cytoplasmic side; that stretch reads MTRTVKRDENAYAR. Residues 15-36 traverse the membrane as a helical segment; the sequence is LGWLLVLFGFGGALLWAAFAPL. Residues 37-432 are Periplasmic-facing; it reads DQGVAVPATV…DRAHVALAEN (396 aa).

The protein belongs to the membrane fusion protein (MFP) (TC 8.A.1) family.

It is found in the cell inner membrane. Its function is as follows. Involved in the secretion of alkaline protease. The protein is Alkaline protease secretion protein AprE (aprE) of Pseudomonas aeruginosa (strain ATCC 15692 / DSM 22644 / CIP 104116 / JCM 14847 / LMG 12228 / 1C / PRS 101 / PAO1).